The following is a 475-amino-acid chain: GDP-fucose protein O-fucosyltransferase 3 (475 aa).

The Cytoplasmic portion of the chain corresponds to 1 to 8; it reads MVRMRRKR. A helical; Signal-anchor for type II membrane protein transmembrane segment spans residues 9 to 29; that stretch reads LWASCICFAAFFFLLVTLQVI. Residues 30 to 475 are Lumenal-facing; the sequence is TELGNSENKA…QEFWMLVFKQ (446 aa). 3 N-linked (GlcNAc...) asparagine glycosylation sites follow: Asn-107, Asn-165, and Asn-315. A disulfide bridge connects residues Cys-386 and Cys-389. N-linked (GlcNAc...) asparagine glycosylation is present at Asn-462.

This sequence belongs to the glycosyltransferase 10 family.

It localises to the endoplasmic reticulum membrane. It carries out the reaction L-threonyl-[protein] + GDP-beta-L-fucose = 3-O-(alpha-L-fucosyl)-L-threonyl-[protein] + GDP + H(+). The enzyme catalyses L-seryl-[protein] + GDP-beta-L-fucose = 3-O-(alpha-L-fucosyl)-L-seryl-[protein] + GDP + H(+). Its pathway is protein modification; protein glycosylation. Its function is as follows. Protein O-fucosyltransferase that specifically catalyzes O-fucosylation of serine or threonine residues in EMI domains of target proteins. Attaches fucose through an O-glycosidic linkage. O-fucosylation of EMI domain-containing proteins may be required for facilitating protein folding and secretion. The polypeptide is GDP-fucose protein O-fucosyltransferase 3 (FUT10) (Gallus gallus (Chicken)).